The primary structure comprises 356 residues: MADVIKRCILGPTEAGWFVAKSQIKKPVDQRPVILTHCKLHSKMLEPKAIVYKKNSSAIPKRVDNILLRSQKPKHIECLLVDSKITKTRSLLKRFGSCLDETSTIVLLNQSVSLWEDCYSLFPKTETRPRIYLGRFQTLFKSFPFNLISDSFSYRLNLSKLPRTPLEKCTVARACKQFPLNQRSPLLDLMGSFERDYVNFSNFSQMLSAQLCDSMAFLIQIFPTPLLRQKAANAWIEVLSKLPYFHILDKSFFSPHLLLQSSENQACKFFNIGPQVYFDPRERLLHVKELLKFALKHIDSNDSLFTFLKQTCYTCDSPYAKVFQPDKQSFHSIISRKRLAHLEKEYFDKDVSKLVL.

As to quaternary structure, component of a complex, at least composed of cbp7 and cbp8.

The protein resides in the mitochondrion. In terms of biological role, translation factor for cob1/cytochrome b; plays a role in cob1 mRNA stabilization and required for correct folding of the protein. The chain is Cytochrome b translation regulator cbp7 from Schizosaccharomyces pombe (strain 972 / ATCC 24843) (Fission yeast).